A 547-amino-acid polypeptide reads, in one-letter code: Signal recognition particle receptor subunit alpha homolog (547 aa).

The segment at 124–174 (LENETDTKSLPVEANNDNSARKKNEYEMKKKGAQSKQTNAPKKGKKQLRKW) is disordered. Residues 142–153 (SARKKNEYEMKK) are compositionally biased toward basic and acidic residues. The tract at residues 343 to 546 (YTISLIGVNG…SVDWVVDQLM (204 aa)) is NG domain. Residues 349-356 (GVNGVGKS), 437-441 (DTAGR), and 498-501 (SKVD) each bind GTP.

It belongs to the GTP-binding SRP family. In terms of assembly, heterodimer of an alpha and a beta chain.

The protein resides in the endoplasmic reticulum membrane. Component of the SRP (signal recognition particle) receptor (SR). Ensures, in conjunction with the signal recognition particle, the correct targeting of the nascent secretory proteins to the endoplasmic reticulum membrane system. GTP hydrolysis may enhance the fidelity of and provide unidirectionality to the targeting reaction. This chain is Signal recognition particle receptor subunit alpha homolog (srp101), found in Schizosaccharomyces pombe (strain 972 / ATCC 24843) (Fission yeast).